We begin with the raw amino-acid sequence, 281 residues long: Pantothenate synthetase (281 aa).

M26–H33 contacts ATP. The active-site Proton donor is H33. Residue Q57 coordinates (R)-pantoate. A beta-alanine-binding site is contributed by Q57. Residue G144–D147 coordinates ATP. Residue Q150 participates in (R)-pantoate binding. ATP contacts are provided by residues A173 and L181–R184.

The protein belongs to the pantothenate synthetase family. Homodimer.

It is found in the cytoplasm. The catalysed reaction is (R)-pantoate + beta-alanine + ATP = (R)-pantothenate + AMP + diphosphate + H(+). It participates in cofactor biosynthesis; (R)-pantothenate biosynthesis; (R)-pantothenate from (R)-pantoate and beta-alanine: step 1/1. Functionally, catalyzes the condensation of pantoate with beta-alanine in an ATP-dependent reaction via a pantoyl-adenylate intermediate. The chain is Pantothenate synthetase from Methylibium petroleiphilum (strain ATCC BAA-1232 / LMG 22953 / PM1).